Here is a 428-residue protein sequence, read N- to C-terminus: Dihydroorotase (428 aa).

Zn(2+)-binding residues include His-59 and His-61. Substrate-binding positions include 61 to 63 and Asn-93; that span reads HLR. The Zn(2+) site is built by Asp-151, His-178, and His-231. Asn-277 provides a ligand contact to substrate. Residue Asp-304 participates in Zn(2+) binding. Asp-304 is a catalytic residue. Substrate-binding positions include His-308 and 322-323; that span reads FG.

It belongs to the metallo-dependent hydrolases superfamily. DHOase family. Class I DHOase subfamily. Requires Zn(2+) as cofactor.

It carries out the reaction (S)-dihydroorotate + H2O = N-carbamoyl-L-aspartate + H(+). It participates in pyrimidine metabolism; UMP biosynthesis via de novo pathway; (S)-dihydroorotate from bicarbonate: step 3/3. Functionally, catalyzes the reversible cyclization of carbamoyl aspartate to dihydroorotate. The polypeptide is Dihydroorotase (Bacillus cereus (strain ATCC 10987 / NRS 248)).